The chain runs to 111 residues: Large ribosomal subunit protein uL22 (111 aa).

It belongs to the universal ribosomal protein uL22 family. Part of the 50S ribosomal subunit.

This protein binds specifically to 23S rRNA; its binding is stimulated by other ribosomal proteins, e.g. L4, L17, and L20. It is important during the early stages of 50S assembly. It makes multiple contacts with different domains of the 23S rRNA in the assembled 50S subunit and ribosome. Functionally, the globular domain of the protein is located near the polypeptide exit tunnel on the outside of the subunit, while an extended beta-hairpin is found that lines the wall of the exit tunnel in the center of the 70S ribosome. The polypeptide is Large ribosomal subunit protein uL22 (Francisella philomiragia subsp. philomiragia (strain ATCC 25017 / CCUG 19701 / FSC 153 / O#319-036)).